A 340-amino-acid chain; its full sequence is Phenylalanine--tRNA ligase alpha subunit (340 aa).

Glu-255 is a Mg(2+) binding site.

It belongs to the class-II aminoacyl-tRNA synthetase family. Phe-tRNA synthetase alpha subunit type 1 subfamily. In terms of assembly, tetramer of two alpha and two beta subunits. Mg(2+) is required as a cofactor.

The protein resides in the cytoplasm. It carries out the reaction tRNA(Phe) + L-phenylalanine + ATP = L-phenylalanyl-tRNA(Phe) + AMP + diphosphate + H(+). This Moorella thermoacetica (strain ATCC 39073 / JCM 9320) protein is Phenylalanine--tRNA ligase alpha subunit.